Consider the following 1801-residue polypeptide: Laminin subunit beta-2 (1801 aa).

Residues 1–35 (MEWASGKPGRGRQGQPVPWELRLGLLLSVLAATLA) form the signal peptide. Residues 46-285 (SRGSCYPATG…ALYELVIRGN (240 aa)) form the Laminin N-terminal domain. Asparagine 251 carries N-linked (GlcNAc...) asparagine glycosylation. 19 disulfides stabilise this stretch: cysteine 286/cysteine 295, cysteine 288/cysteine 313, cysteine 315/cysteine 324, cysteine 327/cysteine 347, cysteine 350/cysteine 359, cysteine 352/cysteine 377, cysteine 380/cysteine 389, cysteine 392/cysteine 410, cysteine 413/cysteine 426, cysteine 415/cysteine 441, cysteine 443/cysteine 452, cysteine 455/cysteine 470, cysteine 473/cysteine 487, cysteine 475/cysteine 494, cysteine 496/cysteine 505, cysteine 508/cysteine 522, cysteine 525/cysteine 537, cysteine 527/cysteine 544, and cysteine 546/cysteine 555. Laminin EGF-like domains follow at residues 286–349 (CFCY…ACRK), 350–412 (CECN…ACRP), 413–472 (CDCD…GCQR), and 473–524 (CQCN…GCRP). An N-linked (GlcNAc...) asparagine glycan is attached at asparagine 371. One can recognise a Laminin EGF-like 5; truncated domain in the interval 525–555 (CDCDVGGALDPQCDEATGQCPCRPHMIGRRC). One can recognise a Laminin IV type B domain in the interval 564 to 780 (RPFLDHLTWE…LLISASSLVY (217 aa)). 32 cysteine pairs are disulfide-bonded: cysteine 786/cysteine 798, cysteine 788/cysteine 805, cysteine 807/cysteine 816, cysteine 819/cysteine 831, cysteine 834/cysteine 846, cysteine 836/cysteine 853, cysteine 855/cysteine 864, cysteine 867/cysteine 877, cysteine 880/cysteine 889, cysteine 882/cysteine 896, cysteine 899/cysteine 908, cysteine 911/cysteine 927, cysteine 930/cysteine 946, cysteine 932/cysteine 957, cysteine 959/cysteine 968, cysteine 971/cysteine 986, cysteine 989/cysteine 1003, cysteine 991/cysteine 1010, cysteine 1013/cysteine 1022, cysteine 1025/cysteine 1038, cysteine 1041/cysteine 1061, cysteine 1043/cysteine 1068, cysteine 1070/cysteine 1079, cysteine 1082/cysteine 1095, cysteine 1098/cysteine 1110, cysteine 1100/cysteine 1117, cysteine 1119/cysteine 1128, cysteine 1131/cysteine 1143, cysteine 1146/cysteine 1158, cysteine 1148/cysteine 1165, cysteine 1167/cysteine 1176, and cysteine 1179/cysteine 1190. 8 consecutive Laminin EGF-like domains span residues 786 to 833 (CQCD…GCQA), 834 to 879 (CQCS…NCRP), 880 to 929 (CVCN…QCRP), 930 to 988 (CPCP…RCQL), 989 to 1040 (CECS…SCHR), 1041 to 1097 (CTCN…GCQP), 1098 to 1145 (CACH…QCRA), and 1146 to 1192 (CDCD…ACHP). An N-linked (GlcNAc...) asparagine glycan is attached at asparagine 1088. The interval 1193–1412 (CHACFGDWDR…LSLTGVNELV (220 aa)) is domain II. N-linked (GlcNAc...) asparagine glycosylation occurs at asparagine 1252. Positions 1259–1306 (AKLVEATEGLRHEIGKTTERLTQLEAELTDVQDENFNANHALSGLERD) form a coiled coil. N-linked (GlcNAc...) asparagine glycans are attached at residues asparagine 1311 and asparagine 1351. The tract at residues 1413–1445 (CGAPGDAPCATSPCGGAGCRDEDGQPRCGGLGC) is domain alpha. A domain I region spans residues 1446-1801 (SGAAATADLA…LQVQIYNTCQ (356 aa)). The stretch at 1475–1529 (GILSRVSETRRQAEEAQQRAQAALDKANASRGQVEQANQELRELIQNVKDFLSQE) forms a coiled coil. The N-linked (GlcNAc...) asparagine glycan is linked to asparagine 1502. Serine 1535 carries the post-translational modification Phosphoserine. A coiled-coil region spans residues 1576-1793 (LAHTMGDVRR…RSVLQAINLQ (218 aa)). The segment covering 1684 to 1694 (ASTAEETAGSA) has biased composition (low complexity). Residues 1684-1703 (ASTAEETAGSAQSRAREAEK) form a disordered region.

In terms of assembly, laminin is a complex glycoprotein, consisting of three different polypeptide chains (alpha, beta, gamma), which are bound to each other by disulfide bonds into a cross-shaped molecule comprising one long and three short arms with globules at each end. Beta-2 is a subunit of laminin-3 (laminin-121 or S-laminin), laminin-4 (laminin-221 or S-merosin), laminin-7 (laminin-321 or KS-laminin), laminin-9 (laminin-421), laminin-11 (laminin-521), laminin-14 (laminin-423) and laminin-15 (laminin-523). In terms of tissue distribution, found in the basement membranes (major component). S-laminin is concentrated in the synaptic cleft of the neuromuscular junction.

Its subcellular location is the secreted. The protein localises to the extracellular space. The protein resides in the extracellular matrix. It is found in the basement membrane. Its function is as follows. Binding to cells via a high affinity receptor, laminin is thought to mediate the attachment, migration and organization of cells into tissues during embryonic development by interacting with other extracellular matrix components. The sequence is that of Laminin subunit beta-2 (Lamb2) from Rattus norvegicus (Rat).